Reading from the N-terminus, the 169-residue chain is Small ribosomal subunit protein uS13m (169 aa).

A disordered region spans residues 149-169 (KKLQEKKNKEQKKSQKCKTKK). The segment covering 150-161 (KLQEKKNKEQKK) has biased composition (basic and acidic residues).

Belongs to the universal ribosomal protein uS13 family. As to quaternary structure, part of the small ribosomal subunit.

It is found in the mitochondrion. Located at the top of the head of the small subunit, it contacts several helices of the small subunit rRNA. This Dictyostelium discoideum (Social amoeba) protein is Small ribosomal subunit protein uS13m (mrps13).